Here is a 274-residue protein sequence, read N- to C-terminus: Large ribosomal subunit protein uL2cz/uL2cy (274 aa).

Disordered regions lie at residues 1–23 and 223–274; these read MAIH…SQVK and MNPV…RRSK.

Belongs to the universal ribosomal protein uL2 family. In terms of assembly, part of the 50S ribosomal subunit.

The protein resides in the plastid. Its subcellular location is the chloroplast. This is Large ribosomal subunit protein uL2cz/uL2cy (rpl2-A) from Ranunculus macranthus (Large buttercup).